A 212-amino-acid polypeptide reads, in one-letter code: Probable transaldolase (212 aa).

K83 serves as the catalytic Schiff-base intermediate with substrate.

It belongs to the transaldolase family. Type 3B subfamily.

The protein resides in the cytoplasm. It catalyses the reaction D-sedoheptulose 7-phosphate + D-glyceraldehyde 3-phosphate = D-erythrose 4-phosphate + beta-D-fructose 6-phosphate. It participates in carbohydrate degradation; pentose phosphate pathway; D-glyceraldehyde 3-phosphate and beta-D-fructose 6-phosphate from D-ribose 5-phosphate and D-xylulose 5-phosphate (non-oxidative stage): step 2/3. In terms of biological role, transaldolase is important for the balance of metabolites in the pentose-phosphate pathway. The protein is Probable transaldolase (tal) of Halalkalibacterium halodurans (strain ATCC BAA-125 / DSM 18197 / FERM 7344 / JCM 9153 / C-125) (Bacillus halodurans).